The following is a 179-amino-acid chain: Large ribosomal subunit protein uL5 (179 aa).

It belongs to the universal ribosomal protein uL5 family. Part of the 50S ribosomal subunit; part of the 5S rRNA/L5/L18/L25 subcomplex. Contacts the 5S rRNA and the P site tRNA. Forms a bridge to the 30S subunit in the 70S ribosome.

In terms of biological role, this is one of the proteins that bind and probably mediate the attachment of the 5S RNA into the large ribosomal subunit, where it forms part of the central protuberance. In the 70S ribosome it contacts protein S13 of the 30S subunit (bridge B1b), connecting the 2 subunits; this bridge is implicated in subunit movement. Contacts the P site tRNA; the 5S rRNA and some of its associated proteins might help stabilize positioning of ribosome-bound tRNAs. The sequence is that of Large ribosomal subunit protein uL5 from Francisella tularensis subsp. novicida (strain U112).